Consider the following 195-residue polypeptide: Putative nucleotidase BH1399 (195 aa).

It belongs to the 5'(3')-deoxyribonucleotidase family.

The sequence is that of Putative nucleotidase BH1399 from Halalkalibacterium halodurans (strain ATCC BAA-125 / DSM 18197 / FERM 7344 / JCM 9153 / C-125) (Bacillus halodurans).